We begin with the raw amino-acid sequence, 533 residues long: Glycogen synthase (533 aa).

K12 is an ADP-alpha-D-glucose binding site. Residues A497–K533 are disordered. A compositionally biased stretch (basic and acidic residues) spans A512 to A525.

The protein belongs to the glycosyltransferase 1 family. Bacterial/plant glycogen synthase subfamily.

It carries out the reaction [(1-&gt;4)-alpha-D-glucosyl](n) + ADP-alpha-D-glucose = [(1-&gt;4)-alpha-D-glucosyl](n+1) + ADP + H(+). Its pathway is glycan biosynthesis; glycogen biosynthesis. Synthesizes alpha-1,4-glucan chains using ADP-glucose. This Burkholderia thailandensis (strain ATCC 700388 / DSM 13276 / CCUG 48851 / CIP 106301 / E264) protein is Glycogen synthase.